The primary structure comprises 243 residues: GTP cyclohydrolase 1 type 2 (243 aa).

Positions 63, 64, 102, 209, and 213 each coordinate a divalent metal cation.

It belongs to the GTP cyclohydrolase I type 2/NIF3 family. As to quaternary structure, homohexamer.

It catalyses the reaction GTP + H2O = 7,8-dihydroneopterin 3'-triphosphate + formate + H(+). It functions in the pathway cofactor biosynthesis; 7,8-dihydroneopterin triphosphate biosynthesis; 7,8-dihydroneopterin triphosphate from GTP: step 1/1. In terms of biological role, converts GTP to dihydroneopterin triphosphate. This chain is GTP cyclohydrolase 1 type 2, found in Helicobacter pylori (strain J99 / ATCC 700824) (Campylobacter pylori J99).